A 404-amino-acid polypeptide reads, in one-letter code: Voltage-gated potassium channel subunit beta-3 (404 aa).

Polar residues predominate over residues 1-14; sequence MQVSIACTEQNLRS. A disordered region spans residues 1-78; that stretch reads MQVSIACTEQ…RESTGRGTGM (78 aa). The span at 28-50 shows a compositional bias: gly residues; that stretch reads PGGGNGGPVGGGHGNPPGGGGLG. NADP(+)-binding residues include Thr97, Trp98, Gln104, and Asp126. Tyr131 acts as the Proton donor/acceptor in catalysis. Asn199, Ser229, Arg230, Gln255, Trp284, Ser285, Pro286, Leu287, Ala288, Cys289, Lys295, Lys305, Gly364, Ser366, Gln370, and Glu373 together coordinate NADP(+).

It belongs to the shaker potassium channel beta subunit family. As to quaternary structure, forms heteromultimeric complex with alpha subunits. Interacts with KCNA5 and KCNB2. Predominantly expressed in brain. Strongest expression in olfactory bulb and thalamic nuclei. Not detected in heart, spleen, lung, liver, skeletal muscle, kidney and testis.

It localises to the cytoplasm. Functionally, regulatory subunit of the voltage-gated potassium (Kv) channels composed of pore-forming and potassium-conducting alpha subunits and of regulatory beta subunits. The beta-3/KCNAB3 subunit may mediate closure of potassium channels. Inactivates Kv1.4/KCNA4 alpha subunit-containing Kv channel current but not Kv1.1/KCNA1 or Kv1.5/KCNA5 channels. May display nicotinamide adenine dinucleotide phosphate (NADPH)-dependent aldoketoreductase activity. The binding of oxidized and reduced NADP(H) cofactors may be required for the regulation of potassium channel activity. The chain is Voltage-gated potassium channel subunit beta-3 from Rattus norvegicus (Rat).